The sequence spans 461 residues: MLELRHRGSCPGPREAVSPPHREGEAAGGDHETESTSDKETDIDDRYGDLDSRTDSDIPEIPPSSDRTPEILKKALSGLSSRWKNWWIRGILTLTMISLFFLIIYMGSFMLMLLVLGIQVKCFHEIITIGYRVYHSYDLPWFRTLSWYFLLCVNYFFYGETVADYFATFVQREEQLQFLIRYHRFISFALYLAGFCMFVLSLVKKHYRLQFYMFAWTHVTLLITVTQSHLVIQNLFEGMIWFLVPISSVICNDITAYLFGFFFGRTPLIKLSPKKTWEGFIGGFFSTVVFGFIAAYVLSKYQYFVCPVEYRSDVNSFVTECEPSELFQLQTYSLPPFLKAVLRQERVSLYPFQIHSIALSTFASLIGPFGGFFASGFKRAFKIKDFANTIPGHGGIMDRFDCQYLMATFVHVYITSFIRGPNPSKVLQQLLVLQPEQQLNIYKTLKTHLIEKGILQPTLKV.

A disordered region spans residues 1–67 (MLELRHRGSC…IPEIPPSSDR (67 aa)). Position 7 is an omega-N-methylarginine (R7). Basic and acidic residues predominate over residues 20–56 (PHREGEAAGGDHETESTSDKETDIDDRYGDLDSRTDS). Phosphoserine is present on residues S35 and S37. The next 6 membrane-spanning stretches (helical) occupy residues 96-116 (MISL…LLVL), 149-169 (FLLC…FATF), 183-203 (HRFI…LSLV), 230-250 (LVIQ…SSVI), 279-299 (GFIG…YVLS), and 357-377 (IALS…ASGF).

It belongs to the CDS family. In terms of assembly, homodimer. Interacts with FOS; this interaction may enhance catalytic activity. It depends on Mg(2+) as a cofactor. In terms of tissue distribution, expressed in adult tissues such as placenta, brain, small intestine, ovary, testis and prostate. Highly expressed in fetal kidney, lung and brain. Lower level in fetal liver.

It is found in the endoplasmic reticulum membrane. It catalyses the reaction a 1,2-diacyl-sn-glycero-3-phosphate + CTP + H(+) = a CDP-1,2-diacyl-sn-glycerol + diphosphate. The catalysed reaction is 1-octadecanoyl-2-(5Z,8Z,11Z,14Z-eicosatetraenoyl)-sn-glycero-3-phosphate + CTP + H(+) = 1-octadecanoyl-2-(5Z,8Z,11Z,14Z-eicosatetraenoyl)-sn-glycero-3-cytidine-5'-diphosphate + diphosphate. The enzyme catalyses 1-octadecanoyl-2-(9Z,12Z-octadecadienoyl)-sn-glycero-3-phosphate + CTP + H(+) = 1-octadecanoyl-2-(9Z,12Z-octadecadienoyl)-sn-glycero-3-cytidine-5'-diphosphate + diphosphate. It carries out the reaction 1-hexadecanoyl-2-(5Z,8Z,11Z,14Z-eicosatetraenoyl)-sn-glycero-3-phosphate + CTP + H(+) = 1-hexadecanoyl-2-(5Z,8Z,11Z,14Z-eicosatetraenoyl)-sn-glycero-3-cytidine-5'-diphosphate + diphosphate. It catalyses the reaction 1,2-di-(5Z,8Z,11Z,14Z)-eicosatetraenoyl-sn-glycero-3-phosphate + CTP + H(+) = 1,2-di-(5Z,8Z,11Z,14Z-eicosatetraenoyl)-sn-glycero-3-cytidine-5'-diphosphate + diphosphate. The catalysed reaction is 1-octadecanoyl-2-(9Z-octadecenoyl)-sn-glycero-3-phosphate + CTP + H(+) = 1-octadecanoyl-2-(9Z-octadecenoyl)-sn-glycero-3-cytidine-5'-diphosphate + diphosphate. The enzyme catalyses 1-octadecanoyl-2-(4Z,7Z,10Z,13Z,16Z,19Z-docosahexaenoyl)-sn-glycero-3-phosphate + CTP + H(+) = 1-octadecanoyl-2-(4Z,7Z,10Z,13Z,16Z,19Z-docosahexaenoyl)-sn-glycero-3-cytidine-5'-diphosphate + diphosphate. It carries out the reaction 1,2-di-(9Z,12Z-octadecadienoyl)-sn-glycero-3-phosphate + CTP + H(+) = 1,2-di-(9Z,12Z-octadecadienoyl)-sn-glycero-3-cytidine-5'-diphosphate + diphosphate. It catalyses the reaction 1,2-di-(9Z-octadecenoyl)-sn-glycero-3-phosphate + CTP + H(+) = 1,2-di-(9Z-octadecenoyl)-sn-glycero-3-cytidine-5'-diphosphate + diphosphate. Its pathway is phospholipid metabolism; CDP-diacylglycerol biosynthesis; CDP-diacylglycerol from sn-glycerol 3-phosphate: step 3/3. Its activity is regulated as follows. Inhibited by its anionic phospholipid end products, with phosphatidylinositol-(4,5)- bisphosphate showing the strongest inhibition. Catalyzes the conversion of phosphatidic acid (PA) to CDP-diacylglycerol (CDP-DAG), an essential intermediate in the synthesis of phosphatidylglycerol, cardiolipin and phosphatidylinositol. Exhibits almost no acyl chain preference for PA, showing no discrimination for the sn-1/sn-2 acyl chain composition of PAs. Plays an important role in regulating the growth of lipid droplets which are storage organelles at the center of lipid and energy homeostasis. Positively regulates the differentiation and development of adipocytes. This Homo sapiens (Human) protein is Phosphatidate cytidylyltransferase 1.